Consider the following 383-residue polypeptide: Transcription factor Y1 (383 aa).

HTH myb-type domains lie at 9-61 (KVGL…INYL) and 62-116 (RADV…SRQI). 2 consecutive DNA-binding regions (H-T-H motif) follow at residues 37–61 (WRSLPKNAGLLRCGKSCRLRWINYL) and 89–112 (WSLIASHFPGRTDNEIKNYWNSHL). The tract at residues 136–250 (SKLHSAEKRR…DATGPWELDP (115 aa)) is disordered. Composition is skewed to low complexity over residues 155–170 (KSSSANTTTNTTSSKT) and 191–207 (ASSPPTAATTTSAASSP).

The protein localises to the nucleus. Its pathway is pigment biosynthesis. Functionally, transcription factor involved in regulating the biosynthetic pathway of flavan-4-ol-derived red phlobaphene and red-brown 3-deoxyanthocyanidin (3-DA) pigments. Regulates transcription of chalcone synthase, chalcone isomerase, dihydroflavonol reductase and flavonoid 3'-hydroxylase genes required for the phlobaphene and 3-DA biosynthesis. Transcription of these genes is activated in mesocotyls in response to ingress of non-pathogenic fungus C.heterostrophus. Regulates the production of 3-DA phytoalexins (luteolinidin, 5-methoxyluteolinidin, apigeninidin and 7-methoxyapigeninidin) in mesocotyls in response to C.heterostrophus and corn leaf aphid (CLA) R.maidis. Involved in resistance against anthracnose leaf blight (ALB) caused by the pathogenic C.sublineolum fungus by inducing the production of 3-DA phytoalexins. Confers resistance, also by inducing the production of 3-DA phytoalexins, against CLA R.maidis, which is an insect and a pest. This chain is Transcription factor Y1, found in Sorghum bicolor (Sorghum).